We begin with the raw amino-acid sequence, 160 residues long: MHILKKPDLTDPKLRAKLAKGMGHNYYGEPAWPNDLLYIFPVVILGTIACIVGLSVLDPAMLGDKADPFATPLEILPEWYLYPVFQILRVVPNKLLGIALQTLVPLGLMLIPFIESFNKFQNPFRRPIAMAVFLFGTATTIYLGIGAAMPIDKSLTLGLF.

Helical transmembrane passes span 36-56 (LLYI…GLSV), 95-115 (LLGI…PFIE), and 128-148 (IAMA…IGAA).

Belongs to the cytochrome b family. PetD subfamily. As to quaternary structure, the 4 large subunits of the cytochrome b6-f complex are cytochrome b6, subunit IV (17 kDa polypeptide, PetD), cytochrome f and the Rieske protein, while the 4 small subunits are PetG, PetL, PetM and PetN. The complex functions as a dimer.

It is found in the cellular thylakoid membrane. Its function is as follows. Component of the cytochrome b6-f complex, which mediates electron transfer between photosystem II (PSII) and photosystem I (PSI), cyclic electron flow around PSI, and state transitions. The protein is Cytochrome b6-f complex subunit 4 of Synechococcus sp. (strain CC9311).